We begin with the raw amino-acid sequence, 104 residues long: Large ribosomal subunit protein bL21 (104 aa).

It belongs to the bacterial ribosomal protein bL21 family. In terms of assembly, part of the 50S ribosomal subunit. Contacts protein L20.

In terms of biological role, this protein binds to 23S rRNA in the presence of protein L20. The polypeptide is Large ribosomal subunit protein bL21 (Francisella philomiragia subsp. philomiragia (strain ATCC 25017 / CCUG 19701 / FSC 153 / O#319-036)).